The chain runs to 472 residues: UDP-N-acetylmuramate--L-alanine ligase (472 aa).

123-129 (GSHGKTT) serves as a coordination point for ATP.

It belongs to the MurCDEF family.

The protein localises to the cytoplasm. It carries out the reaction UDP-N-acetyl-alpha-D-muramate + L-alanine + ATP = UDP-N-acetyl-alpha-D-muramoyl-L-alanine + ADP + phosphate + H(+). It participates in cell wall biogenesis; peptidoglycan biosynthesis. Cell wall formation. This Solibacter usitatus (strain Ellin6076) protein is UDP-N-acetylmuramate--L-alanine ligase.